The primary structure comprises 80 residues: U-poneritoxin(01)-Om3a (80 aa).

Positions 1 to 25 are cleaved as a signal peptide; sequence MKPSGLALAFLVVFMMAIMYNSVQA. The propeptide occupies 26-39; that stretch reads AAIADADAEAEAIA.

This sequence belongs to the formicidae venom precursor-01 superfamily. Post-translationally, truncated sequences of this peptide have also been found in the venom. It is possible they have been cleaved in the venom. In terms of tissue distribution, expressed by the venom gland.

Its subcellular location is the secreted. Its function is as follows. Cationic amphipathic alpha-helical peptide with antimicrobial activities against E.coli (MIC=3.1 uM), S.aureus (MIC=25 uM), and S.cerevisiae (MIC=50 uM). Also shows histamine-releasing activity (37.5% at 10 uM). Does not show hemolytic activity, even at 50 uM. This chain is U-poneritoxin(01)-Om3a, found in Odontomachus monticola (Trap-jaw ant).